A 225-amino-acid chain; its full sequence is Heptaprenylglyceryl phosphate synthase (225 aa).

Lys-6 is a sn-glycerol 1-phosphate binding site. Residues Asp-8 and Thr-34 each coordinate Mg(2+). Sn-glycerol 1-phosphate-binding positions include 153-158 (YVEYSG), Gly-183, and 203-204 (GN).

This sequence belongs to the GGGP/HepGP synthase family. Group I subfamily. In terms of assembly, homodimer. The cofactor is Mg(2+).

It carries out the reaction sn-glycerol 1-phosphate + all-trans-heptaprenyl diphosphate = 3-heptaprenyl-sn-glycero-1-phosphate + diphosphate. It functions in the pathway membrane lipid metabolism; glycerophospholipid metabolism. Prenyltransferase that catalyzes in vivo the transfer of the heptaprenyl moiety of heptaprenyl pyrophosphate (HepPP; 35 carbon atoms) to the C3 hydroxyl of sn-glycerol-1-phosphate (G1P), producing heptaprenylglyceryl phosphate (HepGP). This reaction is an ether-bond-formation step in the biosynthesis of archaea-type G1P-based membrane lipids found in Bacillales. This Listeria monocytogenes serotype 4b (strain CLIP80459) protein is Heptaprenylglyceryl phosphate synthase.